A 562-amino-acid polypeptide reads, in one-letter code: SLAIN motif-containing protein-like (562 aa).

Disordered stretches follow at residues 292–313 (QDYA…LHSL), 344–381 (HRYS…IQNH), and 409–562 (SLEA…DGCY). 2 stretches are compositionally biased toward low complexity: residues 295 to 311 (ASSS…ASLH) and 345 to 355 (RYSPSPLSSPR). Polar residues-rich tracts occupy residues 356 to 370 (CQSP…TTSR), 424 to 442 (QGPS…STPP), 465 to 531 (VSTS…STVP), and 539 to 553 (SRRS…STLG).

The protein belongs to the SLAIN motif-containing family.

This Xenopus laevis (African clawed frog) protein is SLAIN motif-containing protein-like.